Here is a 196-residue protein sequence, read N- to C-terminus: dTTP/UTP pyrophosphatase (196 aa).

The Proton acceptor role is filled by aspartate 72.

This sequence belongs to the Maf family. YhdE subfamily. Requires a divalent metal cation as cofactor.

The protein resides in the cytoplasm. The catalysed reaction is dTTP + H2O = dTMP + diphosphate + H(+). It carries out the reaction UTP + H2O = UMP + diphosphate + H(+). Nucleoside triphosphate pyrophosphatase that hydrolyzes dTTP and UTP. May have a dual role in cell division arrest and in preventing the incorporation of modified nucleotides into cellular nucleic acids. This Chlamydia felis (strain Fe/C-56) (Chlamydophila felis) protein is dTTP/UTP pyrophosphatase.